Here is a 203-residue protein sequence, read N- to C-terminus: LexA repressor (203 aa).

A DNA-binding region (H-T-H motif) is located at residues 30–50 (VREICQAVSLKSTSTVHGHLK). Catalysis depends on for autocatalytic cleavage activity residues Ser-127 and Lys-164.

This sequence belongs to the peptidase S24 family. Homodimer.

The enzyme catalyses Hydrolysis of Ala-|-Gly bond in repressor LexA.. In terms of biological role, represses a number of genes involved in the response to DNA damage (SOS response), including recA and lexA. In the presence of single-stranded DNA, RecA interacts with LexA causing an autocatalytic cleavage which disrupts the DNA-binding part of LexA, leading to derepression of the SOS regulon and eventually DNA repair. The polypeptide is LexA repressor (Clostridium perfringens (strain SM101 / Type A)).